The sequence spans 487 residues: Aspartyl/glutamyl-tRNA(Asn/Gln) amidotransferase subunit B (487 aa).

Belongs to the GatB/GatE family. GatB subfamily. As to quaternary structure, heterotrimer of A, B and C subunits.

The catalysed reaction is L-glutamyl-tRNA(Gln) + L-glutamine + ATP + H2O = L-glutaminyl-tRNA(Gln) + L-glutamate + ADP + phosphate + H(+). It carries out the reaction L-aspartyl-tRNA(Asn) + L-glutamine + ATP + H2O = L-asparaginyl-tRNA(Asn) + L-glutamate + ADP + phosphate + 2 H(+). Allows the formation of correctly charged Asn-tRNA(Asn) or Gln-tRNA(Gln) through the transamidation of misacylated Asp-tRNA(Asn) or Glu-tRNA(Gln) in organisms which lack either or both of asparaginyl-tRNA or glutaminyl-tRNA synthetases. The reaction takes place in the presence of glutamine and ATP through an activated phospho-Asp-tRNA(Asn) or phospho-Glu-tRNA(Gln). The sequence is that of Aspartyl/glutamyl-tRNA(Asn/Gln) amidotransferase subunit B from Chlamydia abortus (strain DSM 27085 / S26/3) (Chlamydophila abortus).